A 267-amino-acid polypeptide reads, in one-letter code: 4-hydroxy-tetrahydrodipicolinate reductase (267 aa).

NAD(+)-binding positions include 8 to 13 and Asp-34; that span reads GAAGRM. Arg-35 contacts NADP(+). NAD(+)-binding positions include 98–100 and 122–125; these read GTT and AANF. His-155 functions as the Proton donor/acceptor in the catalytic mechanism. His-156 lines the (S)-2,3,4,5-tetrahydrodipicolinate pocket. Lys-159 (proton donor) is an active-site residue. (S)-2,3,4,5-tetrahydrodipicolinate is bound at residue 165-166; it reads GT.

This sequence belongs to the DapB family.

It is found in the cytoplasm. The catalysed reaction is (S)-2,3,4,5-tetrahydrodipicolinate + NAD(+) + H2O = (2S,4S)-4-hydroxy-2,3,4,5-tetrahydrodipicolinate + NADH + H(+). The enzyme catalyses (S)-2,3,4,5-tetrahydrodipicolinate + NADP(+) + H2O = (2S,4S)-4-hydroxy-2,3,4,5-tetrahydrodipicolinate + NADPH + H(+). The protein operates within amino-acid biosynthesis; L-lysine biosynthesis via DAP pathway; (S)-tetrahydrodipicolinate from L-aspartate: step 4/4. Catalyzes the conversion of 4-hydroxy-tetrahydrodipicolinate (HTPA) to tetrahydrodipicolinate. The chain is 4-hydroxy-tetrahydrodipicolinate reductase from Ectopseudomonas mendocina (strain ymp) (Pseudomonas mendocina).